Consider the following 185-residue polypeptide: Transmembrane protein 140 (185 aa).

At 1–11 the chain is on the cytoplasmic side; it reads MAGPRPRWRDQ. Residues 12–32 traverse the membrane as a helical segment; the sequence is LLFMSIIVLVIVVICLMFYAL. The Extracellular segment spans residues 33-77; it reads LWEAGNLTDLPNLRIGFYNFCLWNEDTSTLQCHQFPELEALGVPR. Asn-38 carries an N-linked (GlcNAc...) asparagine glycan. A helical membrane pass occupies residues 78–98; that stretch reads VGLGLARLGVYGSLVLTLFAP. At 99–114 the chain is on the cytoplasmic side; it reads QPLLLAQCNSDERAWR. The chain crosses the membrane as a helical span at residues 115–135; sequence LAVGFLAVSSVLLAGGLGLFL. Over 136–150 the chain is Extracellular; the sequence is SYVWKWVRLSLPGPG. Residues 151–171 traverse the membrane as a helical segment; it reads FLALGSAQALLILLLIAMAVF. Topologically, residues 172-185 are cytoplasmic; the sequence is PLRAERAESKLESC.

Expression significantly higher in gliomas than in normal brain tissues.

Its subcellular location is the membrane. The protein is Transmembrane protein 140 (TMEM140) of Homo sapiens (Human).